The primary structure comprises 349 residues: Short-wave-sensitive opsin 1 (349 aa).

The Extracellular segment spans residues 1–34 (MSKMPEEEEFYLFKNISSVGPWDGPQYHIAPVWA). A glycan (N-linked (GlcNAc...) asparagine) is linked at N15. Residues 35–59 (FQLQAAFMGIVFLAGLPLNSMVLVA) traverse the membrane as a helical segment. The Cytoplasmic portion of the chain corresponds to 60–71 (TVRYKKLRHPLN). Residues 72-97 (YVLVNVSVGGFLLCIFSVLPVFVNSC) traverse the membrane as a helical segment. Topologically, residues 98 to 111 (NGYFVFGRHVCALE) are extracellular. Residues C108 and C185 are joined by a disulfide bond. The chain crosses the membrane as a helical span at residues 112 to 131 (GFLGTVAGLVTGWSLAFLAF). Residues 132–150 (ERYIVICKPFGNFRFSSKH) lie on the Cytoplasmic side of the membrane. Residues 151 to 174 (ALMVVLTTWTIGIGVSIPPFFGWS) traverse the membrane as a helical segment. At 175–200 (RYIAEGLQCSCGPDWYTVGTKYRSEY) the chain is on the extracellular side. Residues 201 to 228 (YTWFLFIFCFIVPLSLICFSYAQLLRAL) traverse the membrane as a helical segment. Over 229–250 (KAVAAQQQESATTQKAEREVSR) the chain is Cytoplasmic. A helical membrane pass occupies residues 251-274 (MVVVMVGSFCVCYVPYAALAMYMV). Residues 275–282 (NNRNHGLD) are Extracellular-facing. A helical membrane pass occupies residues 283–307 (LRLVSIPAFFSKSSCIYNPIIYCFM). At K294 the chain carries N6-(retinylidene)lysine. The Cytoplasmic portion of the chain corresponds to 308-349 (NKQFRACIMEMVCGKAMTDESDISSSQKTEVSTVSSSQVGPN).

The protein belongs to the G-protein coupled receptor 1 family. Opsin subfamily. Phosphorylated on some or all of the serine and threonine residues present in the C-terminal region.

It is found in the cell membrane. Its subcellular location is the photoreceptor inner segment. The protein resides in the cell projection. The protein localises to the cilium. It localises to the photoreceptor outer segment. It is found in the cytoplasm. Its subcellular location is the perinuclear region. In terms of biological role, visual pigments are the light-absorbing molecules that mediate vision. They consist of an apoprotein, opsin, covalently linked to cis-retinal. Required for the maintenance of cone outer segment organization in the ventral retina, but not essential for the maintenance of functioning cone photoreceptors. Involved in ensuring correct abundance and localization of retinal membrane proteins. May increase spectral sensitivity in dim light. This Saimiri boliviensis boliviensis (Bolivian squirrel monkey) protein is Short-wave-sensitive opsin 1 (OPN1SW).